The primary structure comprises 441 residues: BTB/POZ domain-containing protein At3g05675 (441 aa).

In terms of domain architecture, BTB spans 20–98 (SDIVVRLRNE…LYVVSDDVHE (79 aa)).

It participates in protein modification; protein ubiquitination. May act as a substrate-specific adapter of an E3 ubiquitin-protein ligase complex (CUL3-RBX1-BTB) which mediates the ubiquitination and subsequent proteasomal degradation of target proteins. The chain is BTB/POZ domain-containing protein At3g05675 from Arabidopsis thaliana (Mouse-ear cress).